A 196-amino-acid chain; its full sequence is MGYYAFERLIPVVHPTAFVHPSAVLIGDVIVGAGVYIGPLASLRGDYGRLIVQAGANIQDGCIMHGYCDTDTIVGENGHIGHGAILHGCVIGRDALVGMNSVIMDGAVIGEESIVAAMSFVKAGFSGEKRQLLMGTPARAVRSVSDDELRWKHLNTKEYQDLVGRCHVALHETQPLRQMEENRPRLQGTTDVAPKR.

The tract at residues L176–R196 is disordered.

It belongs to the transferase hexapeptide repeat family.

It participates in amine and polyamine metabolism; carnitine metabolism. Its function is as follows. Overproduction of CaiE stimulates the activity of CaiB and CaiD. In Escherichia fergusonii (strain ATCC 35469 / DSM 13698 / CCUG 18766 / IAM 14443 / JCM 21226 / LMG 7866 / NBRC 102419 / NCTC 12128 / CDC 0568-73), this protein is Carnitine operon protein CaiE.